We begin with the raw amino-acid sequence, 274 residues long: Aliphatic sulfonates import ATP-binding protein SsuB 2 (274 aa).

In terms of domain architecture, ABC transporter spans 21–242 (LALRGVARRF…SRGSARLAAL (222 aa)). 53–60 (GRSGCGKS) contributes to the ATP binding site.

Belongs to the ABC transporter superfamily. Aliphatic sulfonates importer (TC 3.A.1.17.2) family. The complex is composed of two ATP-binding proteins (SsuB), two transmembrane proteins (SsuC) and a solute-binding protein (SsuA).

It localises to the cell inner membrane. It catalyses the reaction ATP + H2O + aliphatic sulfonate-[sulfonate-binding protein]Side 1 = ADP + phosphate + aliphatic sulfonateSide 2 + [sulfonate-binding protein]Side 1.. Functionally, part of the ABC transporter complex SsuABC involved in aliphatic sulfonates import. Responsible for energy coupling to the transport system. The polypeptide is Aliphatic sulfonates import ATP-binding protein SsuB 2 (Pseudomonas aeruginosa (strain UCBPP-PA14)).